Consider the following 520-residue polypeptide: D-aminopeptidase (520 aa).

The Nucleophile role is filled by Ser-62. Catalysis depends on Lys-65, which acts as the Proton donor/acceptor. The tract at residues 477-487 (QRSMDAPSPGE) is important for specificity. Residue Asp-481 coordinates substrate.

Belongs to the peptidase S12 family. As to quaternary structure, homodimer.

The catalysed reaction is Release of an N-terminal D-amino acid from a peptide, Xaa-|-Yaa-, in which Xaa is preferably D-Ala, D-Ser or D-Thr. D-amino acid amides and methyl esters also are hydrolyzed, as is glycine amide.. Inhibited by beta-lactam compounds such as 6-aminopenicillic acid, 7-aminocephalosporanic acid, benzylpenicillin and ampicillin. Inhibited by p-chloromercuribenzoate. In terms of biological role, hydrolyzes N-terminal residues in D-amino acid-containing peptides. This Brucella anthropi (strain ATCC 49188 / DSM 6882 / CCUG 24695 / JCM 21032 / LMG 3331 / NBRC 15819 / NCTC 12168 / Alc 37) (Ochrobactrum anthropi) protein is D-aminopeptidase.